The following is a 248-amino-acid chain: Adenosylcobinamide-GDP ribazoletransferase (248 aa).

Helical transmembrane passes span 36–56 (FFLP…YLAL), 59–79 (FLPP…ITGG), 114–134 (GTIA…SLVL), 137–157 (YSIA…FLCL), 170–190 (IFIG…VLAL), and 199–219 (ATII…LLCL).

This sequence belongs to the CobS family. The cofactor is Mg(2+).

Its subcellular location is the cell membrane. It carries out the reaction alpha-ribazole + adenosylcob(III)inamide-GDP = adenosylcob(III)alamin + GMP + H(+). The catalysed reaction is alpha-ribazole 5'-phosphate + adenosylcob(III)inamide-GDP = adenosylcob(III)alamin 5'-phosphate + GMP + H(+). The protein operates within cofactor biosynthesis; adenosylcobalamin biosynthesis; adenosylcobalamin from cob(II)yrinate a,c-diamide: step 7/7. Its function is as follows. Joins adenosylcobinamide-GDP and alpha-ribazole to generate adenosylcobalamin (Ado-cobalamin). Also synthesizes adenosylcobalamin 5'-phosphate from adenosylcobinamide-GDP and alpha-ribazole 5'-phosphate. The polypeptide is Adenosylcobinamide-GDP ribazoletransferase (Clostridium botulinum (strain Okra / Type B1)).